A 498-amino-acid polypeptide reads, in one-letter code: Hexokinase-1 (498 aa).

Residues 4-24 form a helical membrane-spanning segment; that stretch reads AAVGAAVVCTAAVCAAAAVLV. Positions 35–487 constitute a Hexokinase domain; that stretch reads GRVMAILKEL…SGIGAALLAA (453 aa). Residues 90-228 form a hexokinase small subdomain region; the sequence is TGDEHGLFYA…GVDMRVTALV (139 aa). ADP is bound by residues glycine 104, threonine 105, and asparagine 106. D-glucose-binding residues include threonine 194, lysine 195, asparagine 229, and aspartate 230. A hexokinase large subdomain region spans residues 229–476; sequence NDTVGTLAGG…ETIVIEHSND (248 aa). ADP is bound at residue threonine 253. The D-glucose site is built by asparagine 256, glutamate 284, and glutamate 315. Glycine 441 contributes to the ADP binding site.

It belongs to the hexokinase family.

Its subcellular location is the plastid. It is found in the chloroplast outer membrane. It carries out the reaction a D-hexose + ATP = a D-hexose 6-phosphate + ADP + H(+). It catalyses the reaction D-fructose + ATP = D-fructose 6-phosphate + ADP + H(+). The catalysed reaction is D-glucose + ATP = D-glucose 6-phosphate + ADP + H(+). Its pathway is carbohydrate metabolism; hexose metabolism. It functions in the pathway carbohydrate degradation; glycolysis; D-glyceraldehyde 3-phosphate and glycerone phosphate from D-glucose: step 1/4. Functionally, fructose and glucose phosphorylating enzyme. This is Hexokinase-1 (HXK1) from Spinacia oleracea (Spinach).